We begin with the raw amino-acid sequence, 1049 residues long: Self-sufficient cytochrome P450 monooxygenase CYP505E4 (1049 aa).

Position 405 (C405) interacts with heme. The segment at A462–D492 is disordered. Over residues S471–G486 the composition is skewed to low complexity. The Flavodoxin-like domain maps to I499–L640. Residues S505–T509 and V584–T616 contribute to the FMN site. An FAD-binding FR-type domain is found at R678–P906.

It in the N-terminal section; belongs to the cytochrome P450 family. FAD is required as a cofactor. The cofactor is FMN. Heme serves as cofactor.

The catalysed reaction is 2 oxidized [cytochrome P450] + NADPH = 2 reduced [cytochrome P450] + NADP(+) + H(+). It catalyses the reaction an organic molecule + reduced [NADPH--hemoprotein reductase] + O2 = an alcohol + oxidized [NADPH--hemoprotein reductase] + H2O + H(+). The enzyme catalyses dodecanoate + reduced [NADPH--hemoprotein reductase] + O2 = 5-hydroxydodecanoate + oxidized [NADPH--hemoprotein reductase] + H2O + H(+). It carries out the reaction tetradecanoate + reduced [NADPH--hemoprotein reductase] + O2 = 7-hydroxytetradecanoate + oxidized [NADPH--hemoprotein reductase] + H2O + H(+). The catalysed reaction is dodecan-1-ol + reduced [NADPH--hemoprotein reductase] + O2 = 1,5-dodecanediol + oxidized [NADPH--hemoprotein reductase] + H2O + H(+). It catalyses the reaction dodecan-1-ol + reduced [NADPH--hemoprotein reductase] + O2 = 1,4-dodecanediol + oxidized [NADPH--hemoprotein reductase] + H2O + H(+). The enzyme catalyses dodecan-1-ol + reduced [NADPH--hemoprotein reductase] + O2 = 1,6-dodecanediol + oxidized [NADPH--hemoprotein reductase] + H2O + H(+). In terms of biological role, self-sufficient cytochrome P450 monooxygenase that catalyzes the regioselective in-chain hydroxylation of alkanes, fatty alcohols, and fatty acids at the omega-7 position. Performs hydroxylation of C10-C16 n-alkanes and C12 and C14 fatty alcohols; and thereby enables the one step biocatalytic synthesis of rare alcohols such as 5-dodecanol and 7-tetradecanol. Converts 1-dodecanol into 1,5-dodecanediol as major product with very little sub-terminally hydroxylated products with the 1,4-dodecanediol and 1,6-dodecanediol more abundant. Converts dodecanoic acid to 5-hydroxydodecanoic acid which can be further converted into delta-dodecalactone by lactonization of the 5-hydroxy acid at low pH. Also gives sub-terminal hydroxylation of dodecanoic acid with 9-hydroxydodecanoic acid being the second most abundant product. The sequence is that of Self-sufficient cytochrome P450 monooxygenase CYP505E4 from Penicillium freii.